We begin with the raw amino-acid sequence, 235 residues long: Chalcone--flavanone isomerase 2 (235 aa).

Substrate-binding residues include T50 and S192.

It belongs to the chalcone isomerase family.

The catalysed reaction is a chalcone = a flavanone.. It functions in the pathway secondary metabolite biosynthesis; flavonoid biosynthesis. Functionally, catalyzes the intramolecular cyclization of bicyclic chalcones into tricyclic (S)-flavanones. Responsible for the isomerization of 4,2',4',6'-tetrahydroxychalcone (also termed chalcone) into naringenin. This Chrysanthemum morifolium (Florist's daisy) protein is Chalcone--flavanone isomerase 2 (CHI2).